The primary structure comprises 604 residues: Kelch-like protein 20 (604 aa).

In terms of domain architecture, BTB spans cysteine 63–glutamate 130. One can recognise a BACK domain in the interval cysteine 165–glycine 267. Kelch repeat units lie at residues valine 314–aspartate 360, leucine 362–glycine 408, phenylalanine 409–glycine 455, leucine 457–aspartate 502, isoleucine 504–glycine 549, and leucine 551–methionine 596.

Component of the BCR(KLHL20) E3 ubiquitin ligase complex, at least composed of CUL3, KLHL20 and RBX1. Interacts with PDZ-RhoGEF/ARHGEF11, DAPK1, PML and CORO7. Interacts with F-actin. Interacts with IFN-gamma (IFNG). Interacts (via kelch repeats) with IVNS1ABP (via kelch repeats); this interaction blocks the assembly of CUL3-KLHL20 complex.

Its subcellular location is the cytoplasm. The protein localises to the perinuclear region. It is found in the nucleus. The protein resides in the golgi apparatus. It localises to the trans-Golgi network. Its subcellular location is the cell projection. The protein localises to the axon. It is found in the dendrite. It participates in protein modification; protein ubiquitination. Functionally, substrate-specific adapter of a BCR (BTB-CUL3-RBX1) E3 ubiquitin-protein ligase complex involved in interferon response and anterograde Golgi to endosome transport. The BCR(KLHL20) E3 ubiquitin ligase complex mediates the ubiquitination of DAPK1, leading to its degradation by the proteasome, thereby acting as a negative regulator of apoptosis. The BCR(KLHL20) E3 ubiquitin ligase complex also specifically mediates 'Lys-33'-linked ubiquitination. Involved in anterograde Golgi to endosome transport by mediating 'Lys-33'-linked ubiquitination of CORO7, promoting interaction between CORO7 and EPS15, thereby facilitating actin polymerization and post-Golgi trafficking. Also acts as a regulator of endothelial migration during angiogenesis by controlling the activation of Rho GTPases. The BCR(KLHL20) E3 ubiquitin ligase complex acts as a regulator of neurite outgrowth by mediating ubiquitination and degradation of PDZ-RhoGEF/ARHGEF11. The polypeptide is Kelch-like protein 20 (Klhl20) (Mus musculus (Mouse)).